We begin with the raw amino-acid sequence, 69 residues long: Ferredoxin-1 (69 aa).

The [3Fe-4S] cluster site is built by C12, C18, and C57.

[3Fe-4S] cluster serves as cofactor.

Electron transport protein for the cytochrome P-450-SU1 system. This is Ferredoxin-1 (suaB) from Streptomyces griseolus.